A 457-amino-acid chain; its full sequence is Bifunctional protein GlmU (457 aa).

The interval 1-229 is pyrophosphorylase; it reads MDLAAVILAA…PVEVTGINDR (229 aa). UDP-N-acetyl-alpha-D-glucosamine-binding positions include 8 to 11, Lys22, Gln72, and 77 to 78; these read LAAG and GT. Asp102 provides a ligand contact to Mg(2+). UDP-N-acetyl-alpha-D-glucosamine-binding residues include Gly139, Glu154, Asn169, and Asn227. Asn227 lines the Mg(2+) pocket. Residues 230–250 form a linker region; it reads RQLAEVEKYLRRRVLEDLMQS. Residues 251 to 457 are N-acetyltransferase; the sequence is GVTVLDPAST…WAAKKRDKKV (207 aa). Arg332 and Lys350 together coordinate UDP-N-acetyl-alpha-D-glucosamine. His362 functions as the Proton acceptor in the catalytic mechanism. The UDP-N-acetyl-alpha-D-glucosamine site is built by Tyr365 and Asn376. Acetyl-CoA is bound by residues 385 to 386, Ser404, Ala422, and Arg439; that span reads NY.

It in the N-terminal section; belongs to the N-acetylglucosamine-1-phosphate uridyltransferase family. This sequence in the C-terminal section; belongs to the transferase hexapeptide repeat family. In terms of assembly, homotrimer. It depends on Mg(2+) as a cofactor.

It is found in the cytoplasm. The catalysed reaction is alpha-D-glucosamine 1-phosphate + acetyl-CoA = N-acetyl-alpha-D-glucosamine 1-phosphate + CoA + H(+). It carries out the reaction N-acetyl-alpha-D-glucosamine 1-phosphate + UTP + H(+) = UDP-N-acetyl-alpha-D-glucosamine + diphosphate. Its pathway is nucleotide-sugar biosynthesis; UDP-N-acetyl-alpha-D-glucosamine biosynthesis; N-acetyl-alpha-D-glucosamine 1-phosphate from alpha-D-glucosamine 6-phosphate (route II): step 2/2. The protein operates within nucleotide-sugar biosynthesis; UDP-N-acetyl-alpha-D-glucosamine biosynthesis; UDP-N-acetyl-alpha-D-glucosamine from N-acetyl-alpha-D-glucosamine 1-phosphate: step 1/1. It participates in bacterial outer membrane biogenesis; LPS lipid A biosynthesis. In terms of biological role, catalyzes the last two sequential reactions in the de novo biosynthetic pathway for UDP-N-acetylglucosamine (UDP-GlcNAc). The C-terminal domain catalyzes the transfer of acetyl group from acetyl coenzyme A to glucosamine-1-phosphate (GlcN-1-P) to produce N-acetylglucosamine-1-phosphate (GlcNAc-1-P), which is converted into UDP-GlcNAc by the transfer of uridine 5-monophosphate (from uridine 5-triphosphate), a reaction catalyzed by the N-terminal domain. This chain is Bifunctional protein GlmU, found in Pelotomaculum thermopropionicum (strain DSM 13744 / JCM 10971 / SI).